Here is a 434-residue protein sequence, read N- to C-terminus: Trigger factor (434 aa).

The PPIase FKBP-type domain maps to 161 to 246; the sequence is EDRATLDFTG…LKKVEVRELP (86 aa).

The protein belongs to the FKBP-type PPIase family. Tig subfamily.

It is found in the cytoplasm. The enzyme catalyses [protein]-peptidylproline (omega=180) = [protein]-peptidylproline (omega=0). Involved in protein export. Acts as a chaperone by maintaining the newly synthesized protein in an open conformation. Functions as a peptidyl-prolyl cis-trans isomerase. This chain is Trigger factor, found in Yersinia enterocolitica serotype O:8 / biotype 1B (strain NCTC 13174 / 8081).